A 385-amino-acid chain; its full sequence is Lipid-A-disaccharide synthase 2 (385 aa).

It belongs to the LpxB family.

It catalyses the reaction a lipid X + a UDP-2-N,3-O-bis[(3R)-3-hydroxyacyl]-alpha-D-glucosamine = a lipid A disaccharide + UDP + H(+). Its pathway is bacterial outer membrane biogenesis; LPS lipid A biosynthesis. Condensation of UDP-2,3-diacylglucosamine and 2,3-diacylglucosamine-1-phosphate to form lipid A disaccharide, a precursor of lipid A, a phosphorylated glycolipid that anchors the lipopolysaccharide to the outer membrane of the cell. The protein is Lipid-A-disaccharide synthase 2 of Legionella pneumophila (strain Lens).